The chain runs to 822 residues: Probable RING finger protein 207 homolog (822 aa).

The segment at 8–42 adopts an RING-type zinc-finger fold; that stretch reads CTICKNEFEEPILLSCQHTTCRKCSTGSPSCKSCS. A B box-type 1; atypical zinc finger spans residues 68–115; the sequence is EEMEECANCEQISLPMFYCETCQQSLCLVCRNVTHQARMFSSHKIISS. Positions 73, 76, 97, and 102 each coordinate Zn(2+). The segment at 122 to 164 adopts a B box-type 2; degenerate zinc-finger fold; the sequence is YSSSLCKDHNEPYILYCSDVRKLVCIQCFNGRPLEERHSFISI. 2 coiled-coil regions span residues 526 to 558 and 738 to 769; these read NSQNRILAIEKEEENRRLNQEAKKKEELAGQSA and DKDEVIEKEEIEKETEKEKKKVIRRRVKKVSE.

This is Probable RING finger protein 207 homolog from Caenorhabditis elegans.